The following is a 74-amino-acid chain: UPF0346 protein LCA_0996 (74 aa).

The protein belongs to the UPF0346 family.

The sequence is that of UPF0346 protein LCA_0996 from Latilactobacillus sakei subsp. sakei (strain 23K) (Lactobacillus sakei subsp. sakei).